Here is a 418-residue protein sequence, read N- to C-terminus: 26S proteasome regulatory subunit 6B (418 aa).

Position 1 is an N-acetylmethionine (M1). S21 bears the Phosphoserine mark. A Phosphothreonine modification is found at T25. Residue S28 is modified to Phosphoserine. 206–213 (GPPGCGKT) contacts ATP. 2 positions are modified to N6-acetyllysine: K397 and K401.

Belongs to the AAA ATPase family. Component of the 19S proteasome regulatory particle complex. The 26S proteasome consists of a 20S core particle (CP) and two 19S regulatory subunits (RP). The regulatory particle is made of a lid composed of 9 subunits, a base containing 6 ATPases including PSMC4 and few additional components. Interacts with NR1I3. Interacts with PAAF1. Interacts with TRIM5. Interacts with ZFAND1.

The protein resides in the cytoplasm. It localises to the nucleus. Component of the 26S proteasome, a multiprotein complex involved in the ATP-dependent degradation of ubiquitinated proteins. This complex plays a key role in the maintenance of protein homeostasis by removing misfolded or damaged proteins, which could impair cellular functions, and by removing proteins whose functions are no longer required. Therefore, the proteasome participates in numerous cellular processes, including cell cycle progression, apoptosis, or DNA damage repair. PSMC4 belongs to the heterohexameric ring of AAA (ATPases associated with diverse cellular activities) proteins that unfolds ubiquitinated target proteins that are concurrently translocated into a proteolytic chamber and degraded into peptides. The polypeptide is 26S proteasome regulatory subunit 6B (PSMC4) (Bos taurus (Bovine)).